The primary structure comprises 266 residues: Large ribosomal subunit protein uL4 (266 aa).

This sequence belongs to the universal ribosomal protein uL4 family. In terms of assembly, part of the 50S ribosomal subunit.

Functionally, one of the primary rRNA binding proteins, this protein initially binds near the 5'-end of the 23S rRNA. It is important during the early stages of 50S assembly. It makes multiple contacts with different domains of the 23S rRNA in the assembled 50S subunit and ribosome. Its function is as follows. Forms part of the polypeptide exit tunnel. This chain is Large ribosomal subunit protein uL4, found in Sulfurisphaera tokodaii (strain DSM 16993 / JCM 10545 / NBRC 100140 / 7) (Sulfolobus tokodaii).